A 944-amino-acid polypeptide reads, in one-letter code: Weak acid resistance protein 1 (944 aa).

The zn(2)-C6 fungal-type DNA-binding region spans 76–109; the sequence is CVCCHSLKQKCEPSDVNDIYRKPCRRCLKHKKLC. Disordered regions lie at residues 114–171 and 197–225; these read SKRT…AKQF and SYGA…SVPT. Thr128 carries the post-translational modification Phosphothreonine. Polar residues-rich tracts occupy residues 135–144 and 205–225; these read VNVSTKSKGP and TTST…SVPT.

As to quaternary structure, homodimer. Post-translationally, phosphorylation is required for PDR12 induction.

The protein resides in the nucleus. Its function is as follows. transcription factor which binds to a weak acid response element (WARE) to mediate stress induction of PDR12 and FUN34, encoding an acid transporter and a putative ammonia transporter, respectively. The polypeptide is Weak acid resistance protein 1 (WAR1) (Saccharomyces cerevisiae (strain ATCC 204508 / S288c) (Baker's yeast)).